The following is a 67-amino-acid chain: Large ribosomal subunit protein bL35 (67 aa).

The protein belongs to the bacterial ribosomal protein bL35 family.

The chain is Large ribosomal subunit protein bL35 from Leptospira borgpetersenii serovar Hardjo-bovis (strain JB197).